The following is a 220-amino-acid chain: Peptide methionine sulfoxide reductase MsrA (220 aa).

Residue Cys59 is part of the active site.

It belongs to the MsrA Met sulfoxide reductase family.

The enzyme catalyses L-methionyl-[protein] + [thioredoxin]-disulfide + H2O = L-methionyl-(S)-S-oxide-[protein] + [thioredoxin]-dithiol. It carries out the reaction [thioredoxin]-disulfide + L-methionine + H2O = L-methionine (S)-S-oxide + [thioredoxin]-dithiol. Has an important function as a repair enzyme for proteins that have been inactivated by oxidation. Catalyzes the reversible oxidation-reduction of methionine sulfoxide in proteins to methionine. The sequence is that of Peptide methionine sulfoxide reductase MsrA from Corynebacterium kroppenstedtii (strain DSM 44385 / JCM 11950 / CIP 105744 / CCUG 35717).